The chain runs to 334 residues: MDAFDAIPDPVVIDILNRVGDVKTLIRCRSVSKRFNSLATQSESLLLQLDQILGATESDSEIDSPIASFFRSLFKSIHGLLPPIFSKPANSDEILTRSPKTPAQILSGFERIRNLEVELYGGDVKLEKGAAVKWKAEFGKTLKSCVIVAFRSATVNTSAATEAAAVVDGVVESDSEFVCGLKTRVVWTISALMAASTRHYLMRDLVKDHKEMEKLIVRDSDGEGTVVMDAAGMKEYRETEVRGDNKESERVGERTVVPSVRMSMRHAPSLMLKSGICLEAATLVVVRPTGVASDDNDVELVTEAFAGDGDDCMYGEAVTALLKRRRNVLEMNSF.

The region spanning 1–49 (MDAFDAIPDPVVIDILNRVGDVKTLIRCRSVSKRFNSLATQSESLLLQL) is the F-box domain.

In terms of assembly, part of a SCF (ASK-cullin-F-box) protein ligase complex. Interacts with SKP1A/ASK1, SKP1B/ASK2, ASK11 and ASK13.

It is found in the nucleus. It participates in protein modification; protein ubiquitination. Functionally, component of SCF(ASK-cullin-F-box) E3 ubiquitin ligase complexes, which may mediate the ubiquitination and subsequent proteasomal degradation of target proteins. Involved in the control of basipetal and acropetal auxin transport by promoting the distribution and expression of the auxin transporter PIN2. Promotes cytokinin-mediated cell expansion in the root elongation and differentiation zone, without affecting root cell division. This Arabidopsis thaliana (Mouse-ear cress) protein is F-box protein AUF1.